Reading from the N-terminus, the 528-residue chain is Protein phosphatase 1 regulatory subunit 16A (528 aa).

Positions S18–Q45 form a coiled coil. The segment at T19–A59 is disordered. Positions A40–A58 are enriched in basic and acidic residues. ANK repeat units follow at residues P70 to L99, D103 to A132, E136 to A165, H231 to A260, and D264 to A293. Disordered stretches follow at residues R330–R351 and Q367–R421. The residue at position 433 (S433) is a Phosphoserine. The segment at Q462–P505 is disordered. The S-palmitoyl cysteine moiety is linked to residue C524. C525 carries the cysteine methyl ester modification. C525 carries the S-farnesyl cysteine lipid modification. A propeptide spans L526–M528 (removed in mature form).

Binds PP1.

It is found in the cell membrane. In terms of biological role, inhibits protein phosphatase 1 activity toward phosphorylase, myosin light chain and myosin substrates. The polypeptide is Protein phosphatase 1 regulatory subunit 16A (PPP1R16A) (Homo sapiens (Human)).